The following is a 449-amino-acid chain: Glutamyl-tRNA reductase (449 aa).

Residues 58–61 (TCNR), Ser-121, 126–128 (ETQ), and Gln-132 each bind substrate. Cys-59 (nucleophile) is an active-site residue. 203 to 208 (GLGEMA) contributes to the NADP(+) binding site.

Belongs to the glutamyl-tRNA reductase family. Homodimer.

It catalyses the reaction (S)-4-amino-5-oxopentanoate + tRNA(Glu) + NADP(+) = L-glutamyl-tRNA(Glu) + NADPH + H(+). It participates in porphyrin-containing compound metabolism; protoporphyrin-IX biosynthesis; 5-aminolevulinate from L-glutamyl-tRNA(Glu): step 1/2. Its function is as follows. Catalyzes the NADPH-dependent reduction of glutamyl-tRNA(Glu) to glutamate 1-semialdehyde (GSA). The protein is Glutamyl-tRNA reductase of Helicobacter pylori (strain P12).